A 638-amino-acid chain; its full sequence is uncharacterized protein (638 aa).

The signal sequence occupies residues 1–31 (MKFIKFNDSTIDSFLFMMLTDLAKTLTKSEA). Composition is skewed to basic and acidic residues over residues 247–256 (EEKKAPKLSD), 273–284 (EEMPTWHRETEA), 301–310 (DLGKDASREG), and 329–342 (RKDYSKLEALESQK). Disordered regions lie at residues 247–285 (EEKKAPKLSDDITLPKQSDGDEDIHEEEMPTWHRETEAP) and 301–354 (DLGK…ADGK). One can recognise a VWFA domain in the interval 445–632 (FTLLVDCSAS…DVLYPLLKKL (188 aa)).

This is an uncharacterized protein from Bacillus subtilis (strain 168).